Reading from the N-terminus, the 230-residue chain is RNA chaperone ProQ (230 aa).

A disordered region spans residues 106–181 (AKARVQAQRA…EERHTPVSDI (76 aa)). Positions 146 to 155 (RRKDNAERKP) are enriched in basic and acidic residues. Residues 158–167 (AKPAAAAKPS) show a composition bias toward low complexity.

The protein belongs to the ProQ family.

The protein localises to the cytoplasm. In terms of biological role, RNA chaperone with significant RNA binding, RNA strand exchange and RNA duplexing activities. May regulate ProP activity through an RNA-based, post-transcriptional mechanism. The chain is RNA chaperone ProQ from Cronobacter sakazakii (strain ATCC BAA-894) (Enterobacter sakazakii).